A 157-amino-acid chain; its full sequence is Small ribosomal subunit protein uS7 (157 aa).

The protein belongs to the universal ribosomal protein uS7 family. As to quaternary structure, part of the 30S ribosomal subunit. Contacts proteins S9 and S11.

In terms of biological role, one of the primary rRNA binding proteins, it binds directly to 16S rRNA where it nucleates assembly of the head domain of the 30S subunit. Is located at the subunit interface close to the decoding center, probably blocks exit of the E-site tRNA. The polypeptide is Small ribosomal subunit protein uS7 (Psychrobacter cryohalolentis (strain ATCC BAA-1226 / DSM 17306 / VKM B-2378 / K5)).